The sequence spans 659 residues: DNA ligase (659 aa).

NAD(+) contacts are provided by residues 32–36, 81–82, and E110; these read DAEYD and SL. Residue K112 is the N6-AMP-lysine intermediate of the active site. NAD(+) is bound by residues R133, E168, K284, and K308. 4 residues coordinate Zn(2+): C402, C405, C420, and C425. One can recognise a BRCT domain in the interval 582–659; the sequence is AKPQIFAGKS…SEEEFAELLP (78 aa).

Belongs to the NAD-dependent DNA ligase family. LigA subfamily. The cofactor is Mg(2+). Mn(2+) serves as cofactor.

The catalysed reaction is NAD(+) + (deoxyribonucleotide)n-3'-hydroxyl + 5'-phospho-(deoxyribonucleotide)m = (deoxyribonucleotide)n+m + AMP + beta-nicotinamide D-nucleotide.. DNA ligase that catalyzes the formation of phosphodiester linkages between 5'-phosphoryl and 3'-hydroxyl groups in double-stranded DNA using NAD as a coenzyme and as the energy source for the reaction. It is essential for DNA replication and repair of damaged DNA. This Desulfitobacterium hafniense (strain Y51) protein is DNA ligase.